The primary structure comprises 165 residues: Large ribosomal subunit protein uL15 (165 aa).

The span at Met1–Gly29 shows a compositional bias: basic residues. 2 disordered regions span residues Met1–Gln59 and Lys133–Glu165. Residues Gly30 to Leu47 are compositionally biased toward basic and acidic residues. Acidic residues predominate over residues Ala154–Glu165.

The protein belongs to the universal ribosomal protein uL15 family. Part of the 50S ribosomal subunit. Interacts weakly with proteins L18e and L32e.

In terms of biological role, binds to the 23S rRNA. In Haloarcula marismortui (strain ATCC 43049 / DSM 3752 / JCM 8966 / VKM B-1809) (Halobacterium marismortui), this protein is Large ribosomal subunit protein uL15 (rpl15).